Reading from the N-terminus, the 602-residue chain is Putative pentatricopeptide repeat-containing protein At1g12700, mitochondrial (602 aa).

The transit peptide at 1 to 95 directs the protein to the mitochondrion; that stretch reads MMIKRSITTN…PSLVDFSRFF (95 aa). 14 PPR repeats span residues 87-121, 122-156, 157-191, 192-226, 227-261, 262-296, 297-331, 332-366, 367-401, 402-436, 437-471, 472-506, 507-541, and 542-576; these read SLVD…GIAH, NIYT…GYEP, DTTT…GCQP, DVVT…NVKA, DVFT…GIKS, SVVT…EIVP, NVIT…GISP, NIIT…KCSP, DIVT…GLVA, NAVT…GVLP, DVMT…KMDL, GIVM…GVKP, NVMT…GNAP, and NDCT…GFSA.

It belongs to the PPR family. P subfamily.

It localises to the mitochondrion. In Arabidopsis thaliana (Mouse-ear cress), this protein is Putative pentatricopeptide repeat-containing protein At1g12700, mitochondrial.